The following is a 2590-amino-acid chain: 5-methylorsellinic acid synthase (2590 aa).

The N-terminal acylcarrier protein transacylase domain (SAT) stretch occupies residues 6-255 (LLCGSQAIQW…HNQVNRELFA (250 aa)). The Ketosynthase family 3 (KS3) domain maps to 369–784 (GDSIAIVGMG…GSNAALIVTQ (416 aa)). Residues C534, H669, and H707 each act as for beta-ketoacyl synthase activity in the active site. The segment at 891–1191 (LAFGGQTGNV…HAVNLGGPEP (301 aa)) is malonyl-CoA:ACP transacylase (MAT) domain. Catalysis depends on S978, which acts as the For acyl/malonyl transferase activity. The N-terminal hotdog fold stretch occupies residues 1263–1393 (PKLVSFVKYL…GTVNISSLTS (131 aa)). In terms of domain architecture, PKS/mFAS DH spans 1263-1569 (PKLVSFVKYL…FAKVPTASLK (307 aa)). Positions 1267–1568 (SFVKYLDSNR…RFAKVPTASL (302 aa)) are product template (PT) domain. The active-site Proton acceptor; for dehydratase activity is H1297. Residues 1421–1569 (TSAIQGSLVY…FAKVPTASLK (149 aa)) are C-terminal hotdog fold. D1481 functions as the Proton donor; for dehydratase activity in the catalytic mechanism. Residues 1587–1612 (LKVTEPSANVPKAQPVSTYPKPMKPA) form a disordered region. 2 consecutive Carrier domains span residues 1617–1691 (AQIR…ASGT) and 1736–1812 (SAQA…IPKP). O-(pantetheine 4'-phosphoryl)serine is present on residues S1651 and S1772. A methyltransferase (CMeT) domain region spans residues 1980–2212 (QHRGEHKLLN…GFRHVDWSDD (233 aa)). The interval 2282 to 2590 (LMIHGGGHIM…EGYEFLLRHL (309 aa)) is thioesterase (TE) domain.

It carries out the reaction 3 malonyl-CoA + acetyl-CoA + S-adenosyl-L-methionine + H(+) = 5-methylorsellinate + S-adenosyl-L-homocysteine + 3 CO2 + 4 CoA. It participates in secondary metabolite biosynthesis. In terms of biological role, non-reducing polyketide synthase; part of the cluster A that mediates the biosynthesis of azasperpyranones, members of the azaphilone family that exhibit anti-cancer activities. Azasperpyranones are synthesized by 2 clusters, A and B. Cluster A is responsible for the production of the polyhydric phenol moiety while the azaphilonoid scaffold is produced by the cluster B. The non-reducing polyketide synthase ATEG_03629 produces 5-methyl orsellinic acid, which is then reduced to 5-methyl orsellinic aldehyde by the NRPS-like protein ATEG_03630. 5-methyl orsellinic aldehyde is then first hydroxylated by the FAD-dependent monooxygenase ATEG_03635 and subsequently hydroxylated by the cytochrome P450 monooxygenase ATEG_03631 to produce the unstable polyhydric phenol precursor of azasperpyranones. On the other hand, the polyketide synthase ATEG_07659 is responsible for producing the 3,5-dimethyloctadienone moiety from acetyl-CoA, three malonyl-CoA, and two S-adenosyl methionines (SAM). The 3,5-dimethyloctadienone moiety is then loaded onto the SAT domain of ATEG_07661 and extended with four malonyl-CoA and one SAM, which leads to the formation of 2,4-dihydroxy-6-(5,7-dimethyl-2-oxo-trans-3-trans-5-nonadienyl)-3-methylbenzaldehyde (compound 8) after reductive release and aldol condensation. The FAD-dependent monooxygenase ATEG_07662 is the next enzyme in the biosynthesis sequence and hydroxylates the side chain at the benzylic position of compound 8. In Aspergillus nidulans, afoF, the ortholog of the FAD-dependent oxygenase ATEG_07660, is the key enzyme for the biosynthesis of asperfuranone by catalyzing the hydroxylation at C-8 of to prevent the formation of a six-membered ring hemiacetal intermediate and thus facilitating the formation of a five-membered ring to produce asperfuranone. In Aspergillus terreus, ATEG_07660 is probably not functional, which leads to the formation of the six-membered ring hemiacetal intermediate presperpyranone instead of asperfuranone. Finally, ATEG_03636 is involved in the condensation of the polyhydric phenol moiety produced by cluster A and the perasperpyranone precursor produced by cluster B, to yield azasperpyranone A. Further modifications of azasperpyranone A result in the production of derivatives, including azasperpyranone B to F. The protein is 5-methylorsellinic acid synthase of Aspergillus terreus (strain NIH 2624 / FGSC A1156).